The sequence spans 550 residues: MSDTPKLNQRPEWTALADHAKGTLPHPDLRELFAQDPGRAERYVVRVGDLRIDYSKHLVTDETLALLQELAAATGVSGLRDAMFRGERINITEDRAVLHTALRAPRDAVIEVDGENVVPQVHAVLDKMAGFADRVRSGEWTGHTGRRIRNVVNIGIGGSDLGPAMAYEALRAFTDRSLTLRFVSNVDGADLHEAVRDLDPAETLFIIASKTFTTIETITNATSARSWLLDGLGGDEKAVAKHFVALSTNAEKVADFGIDTANMFEFWDWVGGRYSFDSAIGLSLMIAIGPDRFREMLDGFRIVDEHFRNAEAPANAPLLLGLLGVWYGDFLGAQSHAVLPYSHYLSKFTAYLQQLDMESNGKSVDREGNPVQWQTGPVVWGTPGTNGQHAYYQLIHQGTKLIPADFIGFARPVDELSEELKAQHDLLMANFFAQTQALAFGKTPDEVRAEGVPEELVPHKTFRGNHPTTTVLAAELTPSVLGQLIALYEHKVFVQGAIWNIDSFDQWGVELGKVLAKRVEPALTEGADVPGLDPSTAALVAAYRELKEVH.

E358 functions as the Proton donor in the catalytic mechanism. Catalysis depends on residues H389 and K513.

Belongs to the GPI family.

The protein localises to the cytoplasm. It carries out the reaction alpha-D-glucose 6-phosphate = beta-D-fructose 6-phosphate. It participates in carbohydrate biosynthesis; gluconeogenesis. Its pathway is carbohydrate degradation; glycolysis; D-glyceraldehyde 3-phosphate and glycerone phosphate from D-glucose: step 2/4. Catalyzes the reversible isomerization of glucose-6-phosphate to fructose-6-phosphate. The sequence is that of Glucose-6-phosphate isomerase 1 from Streptomyces coelicolor (strain ATCC BAA-471 / A3(2) / M145).